We begin with the raw amino-acid sequence, 204 residues long: uncharacterized protein (204 aa).

Component of the acid-soluble organic matrix of the aragonitic skeleton (at protein level).

The protein localises to the secreted. This is an uncharacterized protein from Acropora millepora (Staghorn coral).